The sequence spans 189 residues: Large ribosomal subunit protein uL5 (189 aa).

This sequence belongs to the universal ribosomal protein uL5 family. In terms of assembly, part of the 50S ribosomal subunit; part of the 5S rRNA/L5/L18/L25 subcomplex. Contacts the 5S rRNA and the P site tRNA. Forms a bridge to the 30S subunit in the 70S ribosome.

In terms of biological role, this is one of the proteins that bind and probably mediate the attachment of the 5S RNA into the large ribosomal subunit, where it forms part of the central protuberance. In the 70S ribosome it contacts protein S13 of the 30S subunit (bridge B1b), connecting the 2 subunits; this bridge is implicated in subunit movement. Contacts the P site tRNA; the 5S rRNA and some of its associated proteins might help stabilize positioning of ribosome-bound tRNAs. This Corynebacterium jeikeium (strain K411) protein is Large ribosomal subunit protein uL5.